The primary structure comprises 188 residues: Ubiquitin-like protein 4B (188 aa).

Positions 1–76 constitute a Ubiquitin-like domain; it reads MFLTVKLLLG…INVIMRPPED (76 aa). The disordered stretch occupies residues 146–188; sequence EEKEAPAVASELEQNNGGGGGGGGTGGEGGGKKEEEEGEEADQ. Gly residues predominate over residues 161-174; that stretch reads NGGGGGGGGTGGEG.

Expressed specifically in post-meiotic male germ cells of the testis. Abundantly expressed in stage 14-16 spermatids.

It localises to the cytoplasm. This chain is Ubiquitin-like protein 4B (Ubl4b), found in Mus musculus (Mouse).